Here is a 265-residue protein sequence, read N- to C-terminus: Tryptophan synthase alpha chain (265 aa).

Residues E49 and D60 each act as proton acceptor in the active site.

The protein belongs to the TrpA family. As to quaternary structure, tetramer of two alpha and two beta chains.

The enzyme catalyses (1S,2R)-1-C-(indol-3-yl)glycerol 3-phosphate + L-serine = D-glyceraldehyde 3-phosphate + L-tryptophan + H2O. The protein operates within amino-acid biosynthesis; L-tryptophan biosynthesis; L-tryptophan from chorismate: step 5/5. Its function is as follows. The alpha subunit is responsible for the aldol cleavage of indoleglycerol phosphate to indole and glyceraldehyde 3-phosphate. This is Tryptophan synthase alpha chain from Polynucleobacter necessarius subsp. necessarius (strain STIR1).